A 146-amino-acid chain; its full sequence is MKNEMNIQFTALSQNESFARVTVAAFIAQLDPTMDELTEIKTVVSEAVTNAIIHGYENSGQGNVYISVTLEDHIVYLTIRDEGVGIPNLEEARQPLFTTKPELERSGMGFTIMENFMDDISIDSSPEMGTTIHLTKHLSKSKALCN.

It belongs to the anti-sigma-factor family.

It carries out the reaction L-seryl-[protein] + ATP = O-phospho-L-seryl-[protein] + ADP + H(+). It catalyses the reaction L-threonyl-[protein] + ATP = O-phospho-L-threonyl-[protein] + ADP + H(+). Functionally, binds to sigma F and blocks its ability to form an RNA polymerase holoenzyme (E-sigma F). Phosphorylates SpoIIAA on a serine residue. This phosphorylation may enable SpoIIAA to act as an anti-anti-sigma factor that counteracts SpoIIAB and thus releases sigma F from inhibition. This is Anti-sigma F factor from Bacillus licheniformis (strain ATCC 14580 / DSM 13 / JCM 2505 / CCUG 7422 / NBRC 12200 / NCIMB 9375 / NCTC 10341 / NRRL NRS-1264 / Gibson 46).